The primary structure comprises 181 residues: Thioredoxin-like protein CITRX1, chloroplastic (181 aa).

Positions 1–20 are disordered; that stretch reads MQAATLSFHPSAPPPQTSAC. Residues 1 to 70 constitute a chloroplast transit peptide; sequence MQAATLSFHP…PAVATGKYVR (70 aa). Residues 71–181 enclose the Thioredoxin domain; it reads EDYLVKKVSA…MMRDIINNDL (111 aa). Catalysis depends on nucleophile residues C104 and C107. A disulfide bridge connects residues C104 and C107.

It belongs to the thioredoxin family. Plant CITRX-type subfamily.

It is found in the plastid. Its subcellular location is the chloroplast. Its function is as follows. Probable thiol-disulfide oxidoreductase that may play a role in proper chloroplast development. This chain is Thioredoxin-like protein CITRX1, chloroplastic, found in Nicotiana benthamiana.